Reading from the N-terminus, the 78-residue chain is Small ribosomal subunit protein bS16c (78 aa).

It belongs to the bacterial ribosomal protein bS16 family.

It is found in the plastid. Its subcellular location is the chloroplast. The chain is Small ribosomal subunit protein bS16c from Adiantum capillus-veneris (Maidenhair fern).